The chain runs to 196 residues: Putative NADH dehydrogenase/NAD(P)H nitroreductase xcc-b100_0585 (196 aa).

This sequence belongs to the nitroreductase family. HadB/RutE subfamily. The cofactor is FMN.

This Xanthomonas campestris pv. campestris (strain B100) protein is Putative NADH dehydrogenase/NAD(P)H nitroreductase xcc-b100_0585.